Reading from the N-terminus, the 78-residue chain is Large ribosomal subunit protein bL28 (78 aa).

The segment at 1–21 (MSRVCQVTGKRPMVGNNRSHA) is disordered.

This sequence belongs to the bacterial ribosomal protein bL28 family.

The sequence is that of Large ribosomal subunit protein bL28 from Shewanella halifaxensis (strain HAW-EB4).